The following is a 79-amino-acid chain: Serine protease inhibitor Kazal-type 1-like (79 aa).

A signal peptide spans 1–23 (MKVAIIFLLSALALLNLAGNTTA). A Kazal-like domain is found at 26–79 (IGKKANCPNTLVGCPRDYDPVCGTDGKTYANECILCFENRKFGTSIRIQRRGLC). Intrachain disulfides connect Cys32–Cys61, Cys39–Cys58, and Cys47–Cys79.

In terms of tissue distribution, seminal vesicle.

Its subcellular location is the secreted. Functionally, serine protease inhibitor which exhibits anti-trypsin activity. In the pancreas, protects against trypsin-catalyzed premature activation of zymogens. In terms of biological role, in the male reproductive tract, binds to sperm heads where it modulates sperm capacitance by inhibiting calcium uptake and nitrogen oxide (NO) production. The polypeptide is Serine protease inhibitor Kazal-type 1-like (Rattus norvegicus (Rat)).